Consider the following 261-residue polypeptide: Putative cysteine protease YopT-like y4zC (261 aa).

Residues 1 to 15 are compositionally biased toward polar residues; that stretch reads MHSPISGSFTSSTQV. 2 disordered regions span residues 1–48 and 54–73; these read MHSP…CPDK and SKPQ…ARPS. Over residues 61 to 73 the composition is skewed to low complexity; sequence PNNPSTSSPARPS. Residues cysteine 93, histidine 205, and aspartate 220 contribute to the active site.

The protein belongs to the peptidase C58 family.

In terms of biological role, potential cysteine protease, which may play a central role after invasion of host cell. The polypeptide is Putative cysteine protease YopT-like y4zC (Sinorhizobium fredii (strain NBRC 101917 / NGR234)).